Here is a 93-residue protein sequence, read N- to C-terminus: Probable Fe(2+)-trafficking protein (93 aa).

It belongs to the Fe(2+)-trafficking protein family.

Its function is as follows. Could be a mediator in iron transactions between iron acquisition and iron-requiring processes, such as synthesis and/or repair of Fe-S clusters in biosynthetic enzymes. This Polaromonas naphthalenivorans (strain CJ2) protein is Probable Fe(2+)-trafficking protein.